We begin with the raw amino-acid sequence, 493 residues long: Transcript termination protein A18 (493 aa).

The region spanning 100–256 is the Helicase ATP-binding domain; sequence MIELKRPLYI…NSIINIAKLS (157 aa). 113–120 contacts ATP; it reads LACGFGKT. The short motif at 206–209 is the DESH box element; sequence DESH.

The protein belongs to the helicase family. Poxviruses subfamily. Interacts with G2. Might be part of a transcription complex composed at least of G2, A18, and H5.

Its subcellular location is the virion. DNA helicase which seems to act as a postreplicative transcription termination factor. Involved in ATP-dependent release of nascent RNA. Forms a stable complex with single-stranded DNA, and to a lesser extent RNA. This is Transcript termination protein A18 from Camelus.